Reading from the N-terminus, the 447-residue chain is Innexin-5 (447 aa).

Transmembrane regions (helical) follow at residues Thr-30–Val-47, Gln-108–Trp-128, Ala-198–Leu-218, and Val-283–Ala-303. A disordered region spans residues Lys-389–Arg-447. Residues Thr-426–Ser-438 show a composition bias toward acidic residues.

It belongs to the pannexin family.

The protein localises to the cell membrane. It localises to the cell junction. Its subcellular location is the gap junction. Structural component of the gap junctions. The chain is Innexin-5 (inx-5) from Caenorhabditis elegans.